The chain runs to 1002 residues: MRPAARMPNLTRRSRVMIAVALAVVVLLLLGPRLVDTYVNWLWFGELGYRSVFTTQIVTRLLLFLAVAVVFGAVVFAAMALAYRTRPVFVPTAGPNDPIARYRTAVMARLRLVGIGVPVAVGLLAGLIAQNYWQRVQLFLHGGSFGVSDPQFGIDLGFYAFDLPFYRLMLTYLFAATFLAFIANLLGHYLFGGIRLAGRSGALSRAARIQLIALVGFLMLLKAVAYWLDRYELLSHTRGGKPFTGAGYTDINAVLPAKLILMVIAVICAAAVFSAIVLRDLRIPAIGVVLLLLSSLIVGAGWPLVVEQISVRPNAAQKESEYISRSITATRQAYGLTDEAVEYRDYPGNATATAQQVAADRATTSNIRVLDPNIVSPAFTQFQQGKNFYFFPDQLNMDRYRDEDGNLRDYVVAARELNPDRLIDNQRDWINRHSVYTHGNGFIASPANTVRGIANDPNQNGGYPEFLASVVGANGEVVSPGPAPLDQPRIYFGPVIANTPADYAIVGESGTPREYDYETNTATRNYTYTGSGGVPIGNWLTRSVFAAKYAERNFLFSNVIGENSKILFNRDPADRVEAVAPWLTTDTAVYPAIVNKRIVWIVDGYTTLDNYPYSELMSLSSATTDSNEVALNRLQPDKQVSYIRNSVKATVDAYDGTVTLYAQDEQDPVLQAWMKVFPDTVKPKADITPELQEHLRYPEDLFKVQRALLAKYHVDDPVTFFSTSDFWDVPLDPNPTASSYQPPYYIVAKDLAENNNSSSFQLTSAMNRFRRDFLAAYISASSDPETYGKLTVLTIPGQVNGPKLAFNAISTDTAVSQDLGVIGRDNQNRIRWGNLLTLPMGQGGLLYVAPVYASPGASDAASSYPRLIRVAMMYNDQIGYGPTVRDALTDLFGPGADATATGPAATEPPAGQAPQPQGNNQPPAAAPPNRPGQAPTPQQPEVPVAVPPTGPTQLSAGKAAALQDVNAALDALQDAQRSGDFAQYGEALQRLDDAVNKYQATN.

The next 7 helical transmembrane spans lie at 16–36 (VMIA…RLVD), 61–81 (LLLF…AMAL), 112–132 (LVGI…AQNY), 174–194 (FAAT…FGGI), 209–229 (IQLI…YWLD), 258–278 (KLIL…AIVL), and 286–306 (IGVV…PLVV). Residues 891–958 (LFGPGADATA…TGPTQLSAGK (68 aa)) are disordered. Over residues 893 to 923 (GPGADATATGPAATEPPAGQAPQPQGNNQPP) the composition is skewed to low complexity. Positions 937–950 (PQQPEVPVAVPPTG) are enriched in pro residues.

It belongs to the UPF0182 family.

It is found in the cell membrane. This is UPF0182 protein Mvan_1814 from Mycolicibacterium vanbaalenii (strain DSM 7251 / JCM 13017 / BCRC 16820 / KCTC 9966 / NRRL B-24157 / PYR-1) (Mycobacterium vanbaalenii).